The chain runs to 292 residues: Small ribosomal subunit protein uS9m (292 aa).

Residues Val273–Arg292 form a disordered region.

It belongs to the universal ribosomal protein uS9 family.

The protein resides in the mitochondrion. This Kluyveromyces marxianus (Yeast) protein is Small ribosomal subunit protein uS9m (MRPS9).